The sequence spans 273 residues: Transposon Tn7 transposition protein TnsA (273 aa).

Catalysis depends on residues Glu63 and Glu73. The H-T-H motif DNA-binding region spans 90 to 108 (TRQIAIDSGIKHPVIRGVD). Asp114 is a catalytic residue. Mg(2+)-binding residues include Asp114, Gln130, and Val131. The active site involves Lys132.

Heteromer with TnsB. Interacts with TnsC (via C-terminus); this interaction allows TnsA to bind donor DNA. Mg(2+) serves as cofactor. The cofactor is Mn(2+).

Its function is as follows. Required for Tn7 transposition. Forms the transposase, together with TnsB. TnsA executes the 5'-DNA strand breakage reaction. TnsABC and TnsD promote high-frequency insertion of Tn7 into a specific target site known as att-Tn7 whereas TnsABC and TnsE promote low-frequency insertion into many different sites. The sequence is that of Transposon Tn7 transposition protein TnsA from Escherichia coli.